A 114-amino-acid chain; its full sequence is NAD(P)H-quinone oxidoreductase subunit M (114 aa).

It belongs to the complex I NdhM subunit family. NDH-1 can be composed of about 15 different subunits; different subcomplexes with different compositions have been identified which probably have different functions.

Its subcellular location is the cellular thylakoid membrane. The catalysed reaction is a plastoquinone + NADH + (n+1) H(+)(in) = a plastoquinol + NAD(+) + n H(+)(out). The enzyme catalyses a plastoquinone + NADPH + (n+1) H(+)(in) = a plastoquinol + NADP(+) + n H(+)(out). In terms of biological role, NDH-1 shuttles electrons from an unknown electron donor, via FMN and iron-sulfur (Fe-S) centers, to quinones in the respiratory and/or the photosynthetic chain. The immediate electron acceptor for the enzyme in this species is believed to be plastoquinone. Couples the redox reaction to proton translocation, and thus conserves the redox energy in a proton gradient. Cyanobacterial NDH-1 also plays a role in inorganic carbon-concentration. The chain is NAD(P)H-quinone oxidoreductase subunit M from Acaryochloris marina (strain MBIC 11017).